Here is a 216-residue protein sequence, read N- to C-terminus: Cytidylate kinase (216 aa).

7 to 15 provides a ligand contact to ATP; it reads GPSGTGKST.

This sequence belongs to the cytidylate kinase family. Type 1 subfamily.

It localises to the cytoplasm. The enzyme catalyses CMP + ATP = CDP + ADP. It carries out the reaction dCMP + ATP = dCDP + ADP. This is Cytidylate kinase from Chlamydia trachomatis serovar A (strain ATCC VR-571B / DSM 19440 / HAR-13).